Reading from the N-terminus, the 74-residue chain is Kappa-scoloptoxin(07)-Ssm2f (74 aa).

A signal peptide spans 1–19 (MLVFYAILFVTVFSNTVMG). The propeptide occupies 20–41 (ATIDKPIPKPIFREAIEEMEVN).

The protein belongs to the scoloptoxin-07 family. Contains 3 disulfide bonds. Expressed by the venom gland.

It is found in the secreted. Inhibits voltage-gated potassium channels. This is Kappa-scoloptoxin(07)-Ssm2f from Scolopendra mutilans (Chinese red-headed centipede).